Here is an 81-residue protein sequence, read N- to C-terminus: Small ribosomal subunit protein bS16 (81 aa).

This sequence belongs to the bacterial ribosomal protein bS16 family.

This is Small ribosomal subunit protein bS16 from Alkaliphilus oremlandii (strain OhILAs) (Clostridium oremlandii (strain OhILAs)).